A 128-amino-acid chain; its full sequence is Large ribosomal subunit protein bL19 (128 aa).

The protein belongs to the bacterial ribosomal protein bL19 family.

Its function is as follows. This protein is located at the 30S-50S ribosomal subunit interface and may play a role in the structure and function of the aminoacyl-tRNA binding site. The chain is Large ribosomal subunit protein bL19 from Verminephrobacter eiseniae (strain EF01-2).